The chain runs to 584 residues: Glutathione hydrolase proenzyme (584 aa).

A signal peptide spans 1-25; that stretch reads MAPAAMNLLCTVLYLLSSFAQVSDA. An N-linked (GlcNAc...) asparagine glycan is attached at N111. R120 contributes to the L-glutamate binding site. N135, N262, N272, N350, and N370 each carry an N-linked (GlcNAc...) asparagine glycan. T395 acts as the Nucleophile in catalysis. L-glutamate is bound by residues T413, E434, and 465-466; that span reads SS. N547 carries N-linked (GlcNAc...) asparagine glycosylation.

It belongs to the gamma-glutamyltransferase family. In terms of assembly, heterodimer composed of the light and heavy chains. The active site is located in the light chain. Post-translationally, cleaved by autocatalysis into a large and a small subunit and the autocatalytic cleavage is essential to the functional activation of the enzyme.

It is found in the secreted. The catalysed reaction is an N-terminal (5-L-glutamyl)-[peptide] + an alpha-amino acid = 5-L-glutamyl amino acid + an N-terminal L-alpha-aminoacyl-[peptide]. The enzyme catalyses glutathione + H2O = L-cysteinylglycine + L-glutamate. It carries out the reaction an S-substituted glutathione + H2O = an S-substituted L-cysteinylglycine + L-glutamate. It catalyses the reaction leukotriene C4 + H2O = leukotriene D4 + L-glutamate. It functions in the pathway sulfur metabolism; glutathione metabolism. Its function is as follows. Cleaves the gamma-glutamyl bond of extracellular glutathione (gamma-Glu-Cys-Gly), glutathione conjugates, and other gamma-glutamyl compounds. The metabolism of glutathione releases free glutamate and the dipeptide cysteinyl-glycine, which is hydrolyzed to cysteine and glycine by dipeptidases. In the presence of high concentrations of dipeptides and some amino acids, can also catalyze a transpeptidation reaction, transferring the gamma-glutamyl moiety to an acceptor amino acid to form a new gamma-glutamyl compound. Initiates extracellular glutathione (GSH) breakdown, provides cells with a local cysteine supply and contributes to maintain intracellular GSH level. It is part of the cell antioxidant defense mechanism. This is Glutathione hydrolase proenzyme from Arthroderma benhamiae (strain ATCC MYA-4681 / CBS 112371) (Trichophyton mentagrophytes).